We begin with the raw amino-acid sequence, 132 residues long: Small ribosomal subunit protein uS8 (132 aa).

Belongs to the universal ribosomal protein uS8 family. As to quaternary structure, part of the 30S ribosomal subunit. Contacts proteins S5 and S12.

Its function is as follows. One of the primary rRNA binding proteins, it binds directly to 16S rRNA central domain where it helps coordinate assembly of the platform of the 30S subunit. This is Small ribosomal subunit protein uS8 from Clostridium botulinum (strain 657 / Type Ba4).